The sequence spans 177 residues: MSRVAKRPVKVPSGVEVKLDGQDVKVKGPKGELAWTVHDWVAVEQADGELRVQAQLDDRRAVALAGTTRALLNNMVTGVSQGFERKLELRGVGYRAQVQGKNLNLTLGFSHPVDYPVPEGITIEAPSQTEIVVKGADKQQVGEVAAQIRAFRPPEPYKGKGVRYADERVVLKEAKKK.

Belongs to the universal ribosomal protein uL6 family. As to quaternary structure, part of the 50S ribosomal subunit.

In terms of biological role, this protein binds to the 23S rRNA, and is important in its secondary structure. It is located near the subunit interface in the base of the L7/L12 stalk, and near the tRNA binding site of the peptidyltransferase center. The chain is Large ribosomal subunit protein uL6 from Alkalilimnicola ehrlichii (strain ATCC BAA-1101 / DSM 17681 / MLHE-1).